The primary structure comprises 75 residues: Protein SlyX homolog (75 aa).

The protein belongs to the SlyX family.

The polypeptide is Protein SlyX homolog (Chromobacterium violaceum (strain ATCC 12472 / DSM 30191 / JCM 1249 / CCUG 213 / NBRC 12614 / NCIMB 9131 / NCTC 9757 / MK)).